Reading from the N-terminus, the 311-residue chain is Methionyl-tRNA formyltransferase (311 aa).

112–115 (SLLP) contributes to the (6S)-5,6,7,8-tetrahydrofolate binding site.

Belongs to the Fmt family.

It catalyses the reaction L-methionyl-tRNA(fMet) + (6R)-10-formyltetrahydrofolate = N-formyl-L-methionyl-tRNA(fMet) + (6S)-5,6,7,8-tetrahydrofolate + H(+). Its function is as follows. Attaches a formyl group to the free amino group of methionyl-tRNA(fMet). The formyl group appears to play a dual role in the initiator identity of N-formylmethionyl-tRNA by promoting its recognition by IF2 and preventing the misappropriation of this tRNA by the elongation apparatus. This Chelativorans sp. (strain BNC1) protein is Methionyl-tRNA formyltransferase.